The following is a 288-amino-acid chain: MNWISNVVPPKVRSFLRRETPENLWVKCPESGELVFHKDLEANLFVVPGSGYHMRLSPKARLANLFDEGIYEDLPTPEAPVDPLKFRDVKRYTDRLKEYRAKTEAQDCVKLAAGRLEGMEIVAAIQDFDFLAGSLGMAAGEAIITGMTTALNRRAPFIIFTASGGARMQEGIFSLMQMPRTTIAVQRLREANLPYIVVLTNPTTGGVTASYAMLGDIHIAEPGAVIGFAGPRVIEQTIRERLPEGFQRAEYLESHGMIDMVVQRQDMRATLARLCSILTRTPRASEAA.

A CoA carboxyltransferase N-terminal domain is found at 24–288 (LWVKCPESGE…TRTPRASEAA (265 aa)).

The protein belongs to the AccD/PCCB family. As to quaternary structure, acetyl-CoA carboxylase is a heterohexamer composed of biotin carboxyl carrier protein (AccB), biotin carboxylase (AccC) and two subunits each of ACCase subunit alpha (AccA) and ACCase subunit beta (AccD).

The protein localises to the cytoplasm. It carries out the reaction N(6)-carboxybiotinyl-L-lysyl-[protein] + acetyl-CoA = N(6)-biotinyl-L-lysyl-[protein] + malonyl-CoA. The protein operates within lipid metabolism; malonyl-CoA biosynthesis; malonyl-CoA from acetyl-CoA: step 1/1. Its function is as follows. Component of the acetyl coenzyme A carboxylase (ACC) complex. Biotin carboxylase (BC) catalyzes the carboxylation of biotin on its carrier protein (BCCP) and then the CO(2) group is transferred by the transcarboxylase to acetyl-CoA to form malonyl-CoA. The protein is Acetyl-coenzyme A carboxylase carboxyl transferase subunit beta of Methylocella silvestris (strain DSM 15510 / CIP 108128 / LMG 27833 / NCIMB 13906 / BL2).